A 203-amino-acid chain; its full sequence is SOSS complex subunit B1 (203 aa).

The segment at residues 22-92 (IVLETGRVTK…TLYTGRGGDL (71 aa)) is a DNA-binding region (OB). A disordered region spans residues 111–203 (PNPEYIAQQS…GKEPRRTGKR (93 aa)). Residues 117–128 (AQQSQNKQAQAE) are compositionally biased toward polar residues. A compositionally biased stretch (low complexity) spans 129-140 (SGTGTNSHNSSS). Residues 149–182 (ENGNGSNSSGPPTHQSTAPTHSTSGRITRSQPNH) show a composition bias toward polar residues.

This sequence belongs to the SOSS-B family. SOSS-B1 subfamily. Component of the SOSS complex, composed of soss-b (soss-b1/nabp2 or soss-b2/nabp1), soss-a/ints3 and soss-c/inip. SOSS complexes containing soss-b1/nabp2 are more abundant than complexes containing soss-b2/nabp1.

The protein localises to the nucleus. In terms of biological role, component of the SOSS complex, a multiprotein complex that functions downstream of the MRN complex to promote DNA repair and G2/M checkpoint. In the SOSS complex, acts as a sensor of single-stranded DNA that binds to single-stranded DNA. The SOSS complex associates with DNA lesions and influences diverse endpoints in the cellular DNA damage response including cell-cycle checkpoint activation, recombinational repair and maintenance of genomic stability. Required for efficient homologous recombination-dependent repair of double-strand breaks (DSBs). This Xenopus tropicalis (Western clawed frog) protein is SOSS complex subunit B1 (nabp2).